The chain runs to 163 residues: Transcription antitermination protein NusB (163 aa).

Belongs to the NusB family.

Functionally, involved in transcription antitermination. Required for transcription of ribosomal RNA (rRNA) genes. Binds specifically to the boxA antiterminator sequence of the ribosomal RNA (rrn) operons. This is Transcription antitermination protein NusB from Mycolicibacterium vanbaalenii (strain DSM 7251 / JCM 13017 / BCRC 16820 / KCTC 9966 / NRRL B-24157 / PYR-1) (Mycobacterium vanbaalenii).